We begin with the raw amino-acid sequence, 243 residues long: Uridylate kinase (243 aa).

Residue 15-18 (KLSG) participates in ATP binding. The segment at 23-28 (GSEGFG) is involved in allosteric activation by GTP. Residue glycine 57 participates in UMP binding. Residues glycine 58 and arginine 62 each coordinate ATP. Residues aspartate 77 and 138 to 145 (TGNPFFTT) each bind UMP. ATP contacts are provided by threonine 165, tyrosine 171, and aspartate 174.

It belongs to the UMP kinase family. In terms of assembly, homohexamer.

The protein resides in the cytoplasm. It carries out the reaction UMP + ATP = UDP + ADP. It participates in pyrimidine metabolism; CTP biosynthesis via de novo pathway; UDP from UMP (UMPK route): step 1/1. With respect to regulation, allosterically activated by GTP. Inhibited by UTP. In terms of biological role, catalyzes the reversible phosphorylation of UMP to UDP. The chain is Uridylate kinase from Vibrio cholerae serotype O1 (strain ATCC 39541 / Classical Ogawa 395 / O395).